The following is a 285-amino-acid chain: MEKRPYSVEWLSESSQRKAVYSNADLLGYKSGNPDKESNISLPSRATGPTLPSVDYREKENYCVRNVQNEERSPPVKDQLHSQPAPQELDTSRRALMVVPACERSTDQGNKVTGTTDTNKKAKPVCDEDAAARARTKFSPEQLEELERSFKENRYIGSSEKRRLSKVLKLSETQIKTWFQNRRMKFKRQTQDARVDAFFSGLYVPYYGYPDLPTPGYSVQPEFSVLAPHTMAAPSLPFGPLQSTVISPGLHPTAIPSANLGSYPYSSMLVHPMLNEPKRQRYSPY.

2 disordered regions span residues K30–V54 and N69–E88. Positions N69–L80 are enriched in basic and acidic residues. The homeobox DNA-binding region spans A131–T190.

As to expression, widely expressed in the embryo prior to gastrulation. Becomes restricted to the ventral marginal zone by mid/late gastrulation. Ventral localization persists during gastrulation and neurulation in the ventral region of the closed blastopore and in the proctodeum during tail bud stages.

The protein localises to the nucleus. Its function is as follows. Transcriptional repressor. Acts in a ventral signaling pathway downstream of bmp4 to antagonize the Spemann organizer and ventrally pattern the embryonic mesoderm. Represses transcription of the dorsal genes gsc and otx2. In Xenopus laevis (African clawed frog), this protein is Homeobox protein vex1.